Reading from the N-terminus, the 89-residue chain is Small ribosomal subunit protein uS15 (89 aa).

This sequence belongs to the universal ribosomal protein uS15 family. Part of the 30S ribosomal subunit. Forms a bridge to the 50S subunit in the 70S ribosome, contacting the 23S rRNA.

Functionally, one of the primary rRNA binding proteins, it binds directly to 16S rRNA where it helps nucleate assembly of the platform of the 30S subunit by binding and bridging several RNA helices of the 16S rRNA. Its function is as follows. Forms an intersubunit bridge (bridge B4) with the 23S rRNA of the 50S subunit in the ribosome. The polypeptide is Small ribosomal subunit protein uS15 (Azorhizobium caulinodans (strain ATCC 43989 / DSM 5975 / JCM 20966 / LMG 6465 / NBRC 14845 / NCIMB 13405 / ORS 571)).